The sequence spans 401 residues: MAKEKFDRSKPHLNVGTIGHVDHGKTTLTAAITTTLAKAIGGKNKAVAYDQIDNAPEEKARGITIATSHQEYETNNRHYAHVDCPGHADYVKNMITGAAQMDAAILVVSATDGPMPQTKEHILLARQVGVPYVIVFINKADMLAADERAEMIEMVEMDVRDLLNKYNFPGDTTPIVYGSAVKALEGDESEIGAPAILKLMEALDTFVPNPKRVTDKPFLMPVEDVFSITGRGTVATGRVEQGVLKVNDEVEIIGIRPTTKTVVTGIEMFRKLLDQAEAGDNIGALLRGTKKEDIERGQVLAKPGSITPHKKFAAEVYVLTKDEGGRHTPFINNYRPQFYFRTTDVTGVCNLPNGVEMVMPGDNVSLTVELISPIAMDKGLKFAIREGGRTIGSGVVVDIIE.

The tr-type G domain occupies 10–211 (KPHLNVGTIG…ALDTFVPNPK (202 aa)). The segment at 19–26 (GHVDHGKT) is G1. Position 19–26 (19–26 (GHVDHGKT)) interacts with GTP. Residue Thr26 coordinates Mg(2+). Residues 62–66 (GITIA) form a G2 region. The interval 83–86 (DCPG) is G3. GTP contacts are provided by residues 83–87 (DCPGH) and 138–141 (NKAD). The tract at residues 138–141 (NKAD) is G4. The G5 stretch occupies residues 179 to 181 (SAV).

Belongs to the TRAFAC class translation factor GTPase superfamily. Classic translation factor GTPase family. EF-Tu/EF-1A subfamily. As to quaternary structure, monomer.

The protein resides in the cytoplasm. It carries out the reaction GTP + H2O = GDP + phosphate + H(+). Functionally, GTP hydrolase that promotes the GTP-dependent binding of aminoacyl-tRNA to the A-site of ribosomes during protein biosynthesis. This chain is Elongation factor Tu, found in Leptospira borgpetersenii serovar Hardjo-bovis (strain JB197).